A 71-amino-acid polypeptide reads, in one-letter code: Paralithocin 2 (71 aa).

Positions 1–23 (MGAAKVLLVVLAVMVAVPNLAEG) are cleaved as a signal peptide. Cystine bridges form between C29/C58, C34/C54, C39/C52, and C44/C55. R70 is modified (arginine amide; partial).

Belongs to the paralithocin family. In terms of processing, the amidated form is probably the active form.

Has antibacterial activity, mainly against marine Gram-positive bacteria like C.maltaromaticum (MIC=50 uM), C.mobile (MIC=50 uM), C.divergens (MIC=50 uM) and C.funditum (MIC=25 uM) but also against C.glutamicum (MIC=12.5 uM). Has very little or no activity against Gram-negative bacteria. This chain is Paralithocin 2, found in Paralithodes camtschaticus (Red king crab).